A 184-amino-acid chain; its full sequence is Photosystem I assembly protein Ycf4 (184 aa).

2 consecutive transmembrane segments (helical) span residues 21–41 (YFWA…GLSS) and 63–83 (IIMT…WLTI).

This sequence belongs to the Ycf4 family.

The protein localises to the plastid. Its subcellular location is the chloroplast thylakoid membrane. Functionally, seems to be required for the assembly of the photosystem I complex. The protein is Photosystem I assembly protein Ycf4 of Gracilaria tenuistipitata var. liui (Red alga).